Reading from the N-terminus, the 429-residue chain is Citrate synthase, chromosomal (429 aa).

Catalysis depends on residues histidine 306 and aspartate 364.

It belongs to the citrate synthase family.

It catalyses the reaction oxaloacetate + acetyl-CoA + H2O = citrate + CoA + H(+). Its pathway is carbohydrate metabolism; tricarboxylic acid cycle; isocitrate from oxaloacetate: step 1/2. The chain is Citrate synthase, chromosomal (ccsA) from Rhizobium tropici.